The following is a 288-amino-acid chain: 2-hydroxy-6-oxononadienedioate/2-hydroxy-6-oxononatrienedioate hydrolase (288 aa).

Residues 39–274 form the AB hydrolase-1 domain; it reads LVLLHGSGPG…RCGHWAQWEH (236 aa). Catalysis depends on His268, which acts as the Proton acceptor.

The protein belongs to the AB hydrolase superfamily. MhpC family. As to quaternary structure, homodimer.

It carries out the reaction (2Z,4E)-2-hydroxy-6-oxonona-2,4-dienedioate + H2O = (2Z)-2-hydroxypenta-2,4-dienoate + succinate + H(+). It catalyses the reaction (2Z,4E,7E)-2-hydroxy-6-oxonona-2,4,7-trienedioate + H2O = (2Z)-2-hydroxypenta-2,4-dienoate + fumarate + H(+). Its pathway is aromatic compound metabolism; 3-phenylpropanoate degradation. Catalyzes the cleavage of the C5-C6 bond of 2-hydroxy-6-oxononadienedioate and 2-hydroxy-6-oxononatrienedioate, a dienol ring fission product of the bacterial meta-cleavage pathway for degradation of phenylpropionic acid. This chain is 2-hydroxy-6-oxononadienedioate/2-hydroxy-6-oxononatrienedioate hydrolase, found in Paraburkholderia phymatum (strain DSM 17167 / CIP 108236 / LMG 21445 / STM815) (Burkholderia phymatum).